The sequence spans 185 residues: HTH-type transcriptional regulator SAB2452 (185 aa).

An HTH tetR-type domain is found at 6-66 (IENRQRIEEI…YVIQRDLNTF (61 aa)). The segment at residues 29–48 (SMNRIAKELGIGMGTLYRHF) is a DNA-binding region (H-T-H motif).

This Staphylococcus aureus (strain bovine RF122 / ET3-1) protein is HTH-type transcriptional regulator SAB2452.